Reading from the N-terminus, the 476-residue chain is MAKNVTGRITQIMGPVVDVQFEGELPYILNALETRVGDRRLVLEVAQEIGERTVRCIAMDSTDGLARGDEVRDTGEAIAVPVGPETLGRILNVIGEPIDERGPIPTTRTAPIHRQAPSFDEQATSAEILVTGIKVVDLLAPYLKGGKIGLFGGAGVGKTVLIQELINNIAKGHGGVSVFAGVGERTREGNDLYHEMIDAGVIKLGEGTTEGSKVALVYGQMNEPPGARMRVGLSGLTMAEYFRDEEGQDVLFFVDNIFRFTQAGAEVSALLGRIPSAVGYQPTLATDMGALQERITSTKKGSITSVQAIYVPADDLTDPAPATSFSHLDATTTLNRAIAEKGIYPAVDPLDSTSRALDPRIVGEEHYNVAREVQRILQSYKSLQDIIAILGMDELSEDDKLTVARARKIERFLSQPFHVAEVFTGSPGIFVPVEDTVRSFKAICAGEYDHLPEAAFYMVGTIEDAVKKAESLNATA.

Residue Gly-152–Thr-159 participates in ATP binding.

Belongs to the ATPase alpha/beta chains family. F-type ATPases have 2 components, CF(1) - the catalytic core - and CF(0) - the membrane proton channel. CF(1) has five subunits: alpha(3), beta(3), gamma(1), delta(1), epsilon(1). CF(0) has three main subunits: a(1), b(2) and c(9-12). The alpha and beta chains form an alternating ring which encloses part of the gamma chain. CF(1) is attached to CF(0) by a central stalk formed by the gamma and epsilon chains, while a peripheral stalk is formed by the delta and b chains.

The protein resides in the cell inner membrane. It catalyses the reaction ATP + H2O + 4 H(+)(in) = ADP + phosphate + 5 H(+)(out). Its function is as follows. Produces ATP from ADP in the presence of a proton gradient across the membrane. The catalytic sites are hosted primarily by the beta subunits. The sequence is that of ATP synthase subunit beta from Acidiphilium cryptum (strain JF-5).